The primary structure comprises 156 residues: Small ribosomal subunit protein uS7 (156 aa).

This sequence belongs to the universal ribosomal protein uS7 family. Part of the 30S ribosomal subunit. Contacts proteins S9 and S11.

Functionally, one of the primary rRNA binding proteins, it binds directly to 16S rRNA where it nucleates assembly of the head domain of the 30S subunit. Is located at the subunit interface close to the decoding center, probably blocks exit of the E-site tRNA. This chain is Small ribosomal subunit protein uS7, found in Prochlorococcus marinus (strain MIT 9303).